Consider the following 278-residue polypeptide: Shikimate dehydrogenase (NADP(+)) (278 aa).

Residues 19–21 and T66 each bind shikimate; that span reads SRS. The active-site Proton acceptor is the K70. 2 residues coordinate shikimate: N91 and D106. NADP(+) contacts are provided by residues 129 to 133 and F221; that span reads GAGGA. Y223 contributes to the shikimate binding site. NADP(+) is bound at residue G242.

This sequence belongs to the shikimate dehydrogenase family. Homodimer.

The enzyme catalyses shikimate + NADP(+) = 3-dehydroshikimate + NADPH + H(+). It functions in the pathway metabolic intermediate biosynthesis; chorismate biosynthesis; chorismate from D-erythrose 4-phosphate and phosphoenolpyruvate: step 4/7. Functionally, involved in the biosynthesis of the chorismate, which leads to the biosynthesis of aromatic amino acids. Catalyzes the reversible NADPH linked reduction of 3-dehydroshikimate (DHSA) to yield shikimate (SA). The protein is Shikimate dehydrogenase (NADP(+)) of Anaeromyxobacter sp. (strain K).